The sequence spans 140 residues: Large-conductance mechanosensitive channel 3 (140 aa).

Helical transmembrane passes span 8-28 (FISK…AAFG), 30-50 (IVTS…FGGL), and 81-101 (GSFI…FLMV).

The protein belongs to the MscL family. As to quaternary structure, homopentamer.

The protein localises to the cell inner membrane. In terms of biological role, channel that opens in response to stretch forces in the membrane lipid bilayer. May participate in the regulation of osmotic pressure changes within the cell. The polypeptide is Large-conductance mechanosensitive channel 3 (Mesorhizobium japonicum (strain LMG 29417 / CECT 9101 / MAFF 303099) (Mesorhizobium loti (strain MAFF 303099))).